Reading from the N-terminus, the 198-residue chain is TM2 domain-containing protein 2 (198 aa).

An N-terminal signal peptide occupies residues 1–27; it reads MRWPVPPVGYLLLGGQGLLLTFSLISS. The Extracellular portion of the chain corresponds to 28-128; it reads QNQTSPVTYP…FLRGNKPCIK (101 aa). N-linked (GlcNAc...) asparagine glycans are attached at residues Asn29, Asn40, and Asn76. The helical transmembrane segment at 129-149 threads the bilayer; that stretch reads YTGHYFITTLLYSFFLGCFGV. Residues 131–179 form the TM2 domain; that stretch reads GHYFITTLLYSFFLGCFGVDRFCLGHTGTAVGKLLTLGGLGIWWFVDLI. Topologically, residues 150–166 are cytoplasmic; sequence DRFCLGHTGTAVGKLLT. Residues 167–187 form a helical membrane-spanning segment; the sequence is LGGLGIWWFVDLILLITGGLM. The Extracellular portion of the chain corresponds to 188-198; it reads PSDNSNWCTIY.

Belongs to the TM2 family.

It localises to the membrane. In Xenopus tropicalis (Western clawed frog), this protein is TM2 domain-containing protein 2 (tm2d2).